The sequence spans 636 residues: Chaperone protein DnaK (636 aa).

Thr196 carries the phosphothreonine; by autocatalysis modification. Residues 591–636 (LAEAMYKSSSQPGAQEAPPTDGQPKPDEKGKDNVVDAEFVDVDDKK) form a disordered region. The segment covering 614-624 (PKPDEKGKDNV) has biased composition (basic and acidic residues).

Belongs to the heat shock protein 70 family.

Its function is as follows. Acts as a chaperone. In Solibacter usitatus (strain Ellin6076), this protein is Chaperone protein DnaK.